A 299-amino-acid chain; its full sequence is Taste receptor type 2 member 50 (299 aa).

Met1 is a topological domain (extracellular). The helical transmembrane segment at 2–22 (ITFLYIFFSILIMVLFVLGNF) threads the bilayer. Residues 23–55 (ANGFIALVNFIDWVKRKKISSADQILTALAVSR) lie on the Cytoplasmic side of the membrane. A helical membrane pass occupies residues 56-76 (IGLLWALLLNWYLTVLNPAFY). The Extracellular portion of the chain corresponds to 77–87 (SVELRITSYNA). A helical transmembrane segment spans residues 88–108 (WVVTNHFSMWLAANLSIFYLL). The Cytoplasmic segment spans residues 109 to 126 (KIANFSNLLFLHLKRRVR). The chain crosses the membrane as a helical span at residues 127-147 (SVILVILLGTLIFLVCHLLVA). The Extracellular portion of the chain corresponds to 148–181 (NMDESMWAEEYEGNMTGKMKLRNTVHLSYLTVTT). Asn161 is a glycosylation site (N-linked (GlcNAc...) asparagine). A helical transmembrane segment spans residues 182–202 (LWSFIPFTLSLISFLMLICSL). Residues 203–229 (CKHLKKMQLHGEGSQDLSTKVHIKALQ) lie on the Cytoplasmic side of the membrane. Residues 230 to 250 (TLISFLLLCAIFFLFLIVSVW) traverse the membrane as a helical segment. Over 251–259 (SPRRLRNDP) the chain is Extracellular. The helical transmembrane segment at 260 to 280 (VVMVSKAVGNIYLAFDSFILI) threads the bilayer. The Cytoplasmic segment spans residues 281-299 (WRTKKLKHTFLLILCQIRC).

Belongs to the G-protein coupled receptor T2R family. Expressed in subsets of taste receptor cells of the tongue and exclusively in gustducin-positive cells.

The protein resides in the membrane. Receptor that may play a role in the perception of bitterness and is gustducin-linked. May play a role in sensing the chemical composition of the gastrointestinal content. The activity of this receptor may stimulate alpha gustducin, mediate PLC-beta-2 activation and lead to the gating of TRPM5. The sequence is that of Taste receptor type 2 member 50 (TAS2R50) from Homo sapiens (Human).